A 515-amino-acid polypeptide reads, in one-letter code: Protein disulfide-isomerase (515 aa).

Residues 1–20 form the signal peptide; it reads MRSFAPWLVSLLGASAVVAA. Thioredoxin domains lie at 21 to 132 and 339 to 470; these read ADTE…QSLP and VLDG…ENGK. Active-site nucleophile residues include cysteine 54, cysteine 57, cysteine 389, and cysteine 392. Cystine bridges form between cysteine 54–cysteine 57 and cysteine 389–cysteine 392. The interval 478 to 515 is disordered; it reads VASEETQEGGDVTEAAPSATEAETPAATDDEKAEHDEL. The span at 490–504 shows a compositional bias: low complexity; it reads TEAAPSATEAETPAA. Residues 506-515 are compositionally biased toward basic and acidic residues; sequence DDEKAEHDEL. A Prevents secretion from ER motif is present at residues 512–515; that stretch reads HDEL.

The protein belongs to the protein disulfide isomerase family.

Its subcellular location is the endoplasmic reticulum lumen. The catalysed reaction is Catalyzes the rearrangement of -S-S- bonds in proteins.. Participates in the folding of proteins containing disulfide bonds, may be involved in glycosylation, prolyl hydroxylation and triglyceride transfer. The chain is Protein disulfide-isomerase (pdiA) from Aspergillus niger.